The chain runs to 385 residues: FK506-binding protein 5 (385 aa).

A PPIase FKBP-type domain is found at T26–W115. 3 TPR repeats span residues A128–L161, V177–K210, and I211–L244.

It catalyses the reaction [protein]-peptidylproline (omega=180) = [protein]-peptidylproline (omega=0). With respect to regulation, inhibited by both FK506 and rapamycin. Its function is as follows. PPIases accelerate the folding of proteins. It catalyzes the cis-trans isomerization of proline imidic peptide bonds in oligopeptides. The sequence is that of FK506-binding protein 5 (FKBP5) from Rhizopus delemar (strain RA 99-880 / ATCC MYA-4621 / FGSC 9543 / NRRL 43880) (Mucormycosis agent).